The primary structure comprises 185 residues: Adenine phosphoribosyltransferase (185 aa).

The protein belongs to the purine/pyrimidine phosphoribosyltransferase family. In terms of assembly, homodimer.

The protein resides in the cytoplasm. It catalyses the reaction AMP + diphosphate = 5-phospho-alpha-D-ribose 1-diphosphate + adenine. It functions in the pathway purine metabolism; AMP biosynthesis via salvage pathway; AMP from adenine: step 1/1. In terms of biological role, catalyzes a salvage reaction resulting in the formation of AMP, that is energically less costly than de novo synthesis. The polypeptide is Adenine phosphoribosyltransferase (Pectobacterium carotovorum subsp. carotovorum (strain PC1)).